The sequence spans 156 residues: Cellulose synthase operon protein D (156 aa).

Its pathway is glycan metabolism; bacterial cellulose biosynthesis. In terms of biological role, may have a major role in the perfection of crystallization, involved either in the pore structure itself or in the organization of the pores within the linear array of terminal synthesizing complexes (TCs). The polypeptide is Cellulose synthase operon protein D (acsD) (Komagataeibacter xylinus (Gluconacetobacter xylinus)).